We begin with the raw amino-acid sequence, 171 residues long: Calcium channel flower homolog (171 aa).

Residues 1–31 (MSGSVAAGAAAGPVPPAQEEGMTWWYRWLCR) are Cytoplasmic-facing. A helical transmembrane segment spans residues 32 to 52 (LAGVLGAVSCAISGLFNCVTI). Topologically, residues 53–56 (HPLN) are extracellular. Residues 57–77 (IAAGVWMIMNAFILLLCEAPF) traverse the membrane as a helical segment. Topologically, residues 78 to 101 (CCQFVEFANTVAEKVDRLRSWQKA) are cytoplasmic. A helical membrane pass occupies residues 102–122 (VFYCGMAIVPIVMSLTLTTLL). Over 123-124 (GN) the chain is Extracellular. Residues 125-141 (AIAFATGVLYGLSALGK) form a helical membrane-spanning segment. The Cytoplasmic segment spans residues 142-171 (KGDAISYARIQQQRQQADEEKLAETFEGEL).

This sequence belongs to the calcium channel flower family. Interacts with adaptor protein complex 2 (AP-2). In terms of tissue distribution, expressed in calyces in the brain (at protein level). Detected in cultured hippocampal neurons (at protein level).

The protein localises to the cell membrane. It localises to the cytoplasmic vesicle. The protein resides in the secretory vesicle. Its subcellular location is the synaptic vesicle. It is found in the golgi apparatus. The protein localises to the vesicle. Its function is as follows. Transmembrane protein which mediates synaptic endocytosis and fitness-based cell culling. In response to different stimulus strengths, controls two major modes of synaptic vesicle (SV) retrieval in hippocampal neurons; Clathrin-mediated endocytosis (CME) in response to mild stimulation and activity-dependent bulk endocytosis (ADBE) in response to strong stimulation. In cytotoxic T-lymphoocytes (CTLs) facilitates calcium-dependent endocytosis of cytotoxic granules (CGs) at the immuno synapse. Different isoforms work as fitness fingerprints in 'loser' and 'winner' cells and thereby mediate win/lose decisions as part of the cell competition process. The chain is Calcium channel flower homolog (Cacfd1) from Rattus norvegicus (Rat).